Consider the following 399-residue polypeptide: uncharacterized protein (399 aa).

Helical transmembrane passes span 46–66 (IAPYLITLTGTITILLSFFIV), 76–95 (TLPRWVYAMSGLTLFFYQTM), 139–159 (GVGYISLIQLFITALLPFWMA), 181–201 (IIIIVCALLSTAIFGNAFWTF), 226–246 (LMLNEIIVASLSLPCLITCFF), 262–282 (ILPALKHILVWVIITVSSFIW), 303–323 (VQFSIGIIFGELVSRLILAHM), 330–350 (IIQAPLYPLILSTFCSTINYF), and 352–372 (GTIIIPENLLLILFTVTSFVH).

Belongs to the CDP-alcohol phosphatidyltransferase class-I family.

It localises to the membrane. This is an uncharacterized protein from Dictyostelium discoideum (Social amoeba).